Consider the following 327-residue polypeptide: DNA-directed RNA polymerase subunit alpha (327 aa).

Residues 1-231 are alpha N-terminal domain (alpha-NTD); the sequence is MIYQMQMPAK…DHVLLFADFS (231 aa). The alpha C-terminal domain (alpha-CTD) stretch occupies residues 247-327; sequence DEFETMRRLL…GMDITRYQMK (81 aa).

The protein belongs to the RNA polymerase alpha chain family. Homodimer. The RNAP catalytic core consists of 2 alpha, 1 beta, 1 beta' and 1 omega subunit. When a sigma factor is associated with the core the holoenzyme is formed, which can initiate transcription.

It carries out the reaction RNA(n) + a ribonucleoside 5'-triphosphate = RNA(n+1) + diphosphate. Functionally, DNA-dependent RNA polymerase catalyzes the transcription of DNA into RNA using the four ribonucleoside triphosphates as substrates. The chain is DNA-directed RNA polymerase subunit alpha from Chlorobium chlorochromatii (strain CaD3).